Consider the following 99-residue polypeptide: NADH-quinone oxidoreductase subunit K 1 (99 aa).

The next 3 membrane-spanning stretches (helical) occupy residues 3–23 (PVNY…GVLV), 28–48 (IVVF…LVTF), and 59–79 (IVAF…LAII).

Belongs to the complex I subunit 4L family. In terms of assembly, NDH-1 is composed of 14 different subunits. Subunits NuoA, H, J, K, L, M, N constitute the membrane sector of the complex.

It is found in the cell membrane. It carries out the reaction a quinone + NADH + 5 H(+)(in) = a quinol + NAD(+) + 4 H(+)(out). In terms of biological role, NDH-1 shuttles electrons from NADH, via FMN and iron-sulfur (Fe-S) centers, to quinones in the respiratory chain. The immediate electron acceptor for the enzyme in this species is believed to be a menaquinone. Couples the redox reaction to proton translocation (for every two electrons transferred, four hydrogen ions are translocated across the cytoplasmic membrane), and thus conserves the redox energy in a proton gradient. The polypeptide is NADH-quinone oxidoreductase subunit K 1 (Streptomyces griseus subsp. griseus (strain JCM 4626 / CBS 651.72 / NBRC 13350 / KCC S-0626 / ISP 5235)).